Consider the following 796-residue polypeptide: Kinesin-like protein KIF3C (796 aa).

Positions 10 to 367 (ALKVVARCRP…LRFANRAKNI (358 aa)) constitute a Kinesin motor domain. An ATP-binding site is contributed by 97 to 104 (GQTGTGKT). 3 disordered regions span residues 252–292 (RQNK…PKEA), 397–422 (EKKG…APAG), and 758–796 (KVRK…VDHD). Residues 256–269 (AGPNAAGGPATQPT) are compositionally biased toward low complexity. Residues 378–632 (KDTLLREFQE…NEQTRELKLK (255 aa)) adopt a coiled-coil conformation. Basic residues predominate over residues 401 to 416 (MLGKRPRRKSSRRKKA). Residues 633–793 (YLIIENFIPP…SVPLHPATVV (161 aa)) form a globular region.

This sequence belongs to the TRAFAC class myosin-kinesin ATPase superfamily. Kinesin family. Kinesin II subfamily. As to quaternary structure, heterodimer of KIF3A and KIF3C.

It is found in the cytoplasm. Its subcellular location is the cytoskeleton. Microtubule-based anterograde translocator for membranous organelles. The polypeptide is Kinesin-like protein KIF3C (Kif3c) (Mus musculus (Mouse)).